The primary structure comprises 309 residues: Dehydrogenase/reductase SDR family member 7B (309 aa).

Topologically, residues 1-4 (MDLT) are cytoplasmic. Residues 5–25 (TWAIFPLLLGSIGVYSLYKLL) traverse the membrane as a helical; Signal-anchor for type II membrane protein segment. Residues 26–272 (QRLRSGAYLQ…AVGERRKELL (247 aa)) lie on the Lumenal side of the membrane. The NAD(+) site is built by S46 and L48. A substrate-binding site is contributed by S178. Residues Y191, K195, and T226 each contribute to the NAD(+) site. The active-site Proton acceptor is the Y191.

This sequence belongs to the short-chain dehydrogenases/reductases (SDR) family.

It is found in the endoplasmic reticulum membrane. In terms of biological role, putative oxidoreductase. The sequence is that of Dehydrogenase/reductase SDR family member 7B (dhrs7b) from Xenopus tropicalis (Western clawed frog).